A 299-amino-acid chain; its full sequence is 4-hydroxybenzoate octaprenyltransferase (299 aa).

8 consecutive transmembrane segments (helical) span residues Val33 to Val53, Trp56 to Ile76, Asn105 to Asn125, Leu151 to Ile171, Trp180 to Val200, Ala214 to Leu234, His247 to Ala267, and Ala278 to Thr298.

This sequence belongs to the UbiA prenyltransferase family. The cofactor is Mg(2+).

It localises to the cell inner membrane. It catalyses the reaction all-trans-octaprenyl diphosphate + 4-hydroxybenzoate = 4-hydroxy-3-(all-trans-octaprenyl)benzoate + diphosphate. Its pathway is cofactor biosynthesis; ubiquinone biosynthesis. In terms of biological role, catalyzes the prenylation of para-hydroxybenzoate (PHB) with an all-trans polyprenyl group. Mediates the second step in the final reaction sequence of ubiquinone-8 (UQ-8) biosynthesis, which is the condensation of the polyisoprenoid side chain with PHB, generating the first membrane-bound Q intermediate 3-octaprenyl-4-hydroxybenzoate. This is 4-hydroxybenzoate octaprenyltransferase from Xylella fastidiosa (strain M23).